A 233-amino-acid polypeptide reads, in one-letter code: Glyceraldehyde 3-phosphate phosphatase (233 aa).

Belongs to the HAD-like hydrolase superfamily. Mg(2+) serves as cofactor.

In terms of biological role, catalyzes the dephosphorylation of D,L-glyceraldehyde 3-phosphate in vitro. The polypeptide is Glyceraldehyde 3-phosphate phosphatase (Methanopyrus kandleri (strain AV19 / DSM 6324 / JCM 9639 / NBRC 100938)).